Consider the following 470-residue polypeptide: MGGAVVDEGPTGIKAPDGGWGWAVLFGCFIITGFSYAFPKAVSVFFKELMHEFGIGYSDTAWISSILLAMLYGTGPLCSVCVNRFGCRPVMLVGGLFASLGMVAASFCRSIIQIYLTTGVITGLGLALNFQPSLIMLNRYFNKRRPIANGLAAAGSPVFLCALSPLGQLLQDHYGWRGGFLILGGLLLNCCVCAALMRPLVAPQVGGGTEPRGPQRPPQRLLDLSVFRDRGFLIYAVAASIMVLGLFVPPVFVVSYAKDMGVPDTKAAFLLTILGFIDIFARPTAGFITGLKKVRPYSVYLFSFAMFFNGFTDLTGSTATDYGGLVVFCIFFGISYGMVGALQFEVLMAIVGTQKFSSAIGLVLLLEAVAVLIGPPSGGKLLDATKVYKYVFILAGAEVLTSSLVLLLGNFFCIGKRKRPEVTEPEEVASEEKLHKPPVDVGVDSREVEHFLKAEPEKNGEVVHTPETSV.

The Cytoplasmic segment spans residues 1–17; the sequence is MGGAVVDEGPTGIKAPD. Residues 18–38 form a helical membrane-spanning segment; that stretch reads GGWGWAVLFGCFIITGFSYAF. Topologically, residues 39–61 are extracellular; it reads PKAVSVFFKELMHEFGIGYSDTA. A helical membrane pass occupies residues 62–82; sequence WISSILLAMLYGTGPLCSVCV. The Cytoplasmic segment spans residues 83–84; sequence NR. A helical transmembrane segment spans residues 85–105; it reads FGCRPVMLVGGLFASLGMVAA. Over 106 to 109 the chain is Extracellular; it reads SFCR. Residues 110–130 form a helical membrane-spanning segment; the sequence is SIIQIYLTTGVITGLGLALNF. Residues 131-149 lie on the Cytoplasmic side of the membrane; that stretch reads QPSLIMLNRYFNKRRPIAN. Residues 150-170 form a helical membrane-spanning segment; that stretch reads GLAAAGSPVFLCALSPLGQLL. At 171 to 179 the chain is on the extracellular side; sequence QDHYGWRGG. A helical transmembrane segment spans residues 180 to 200; that stretch reads FLILGGLLLNCCVCAALMRPL. Residues 201–231 are Cytoplasmic-facing; that stretch reads VAPQVGGGTEPRGPQRPPQRLLDLSVFRDRG. The helical transmembrane segment at 232-252 threads the bilayer; it reads FLIYAVAASIMVLGLFVPPVF. Topologically, residues 253-267 are extracellular; sequence VVSYAKDMGVPDTKA. A helical membrane pass occupies residues 268–288; that stretch reads AFLLTILGFIDIFARPTAGFI. Residues 289-298 lie on the Cytoplasmic side of the membrane; that stretch reads TGLKKVRPYS. The chain crosses the membrane as a helical span at residues 299-319; it reads VYLFSFAMFFNGFTDLTGSTA. The Extracellular segment spans residues 320–321; it reads TD. A helical membrane pass occupies residues 322–342; it reads YGGLVVFCIFFGISYGMVGAL. The Cytoplasmic segment spans residues 343–355; sequence QFEVLMAIVGTQK. A helical membrane pass occupies residues 356–376; it reads FSSAIGLVLLLEAVAVLIGPP. Residues 377-391 are Extracellular-facing; that stretch reads SGGKLLDATKVYKYV. Residues 392–412 traverse the membrane as a helical segment; the sequence is FILAGAEVLTSSLVLLLGNFF. Over 413–470 the chain is Cytoplasmic; sequence CIGKRKRPEVTEPEEVASEEKLHKPPVDVGVDSREVEHFLKAEPEKNGEVVHTPETSV. Basolateral sorting signal stretches follow at residues 429–446 and 446–470; these read ASEE…VDSR and REVE…ETSV. A Phosphoserine modification is found at S430. Phosphothreonine is present on T465. A Phosphoserine modification is found at S469.

The protein belongs to the major facilitator superfamily. Monocarboxylate porter (TC 2.A.1.13) family. Interacts with BSG; interaction mediates SLC16A3 targeting to the plasma membrane.

It localises to the cell membrane. The protein resides in the basolateral cell membrane. The enzyme catalyses (S)-lactate(in) + H(+)(in) = (S)-lactate(out) + H(+)(out). The catalysed reaction is pyruvate(out) + H(+)(out) = pyruvate(in) + H(+)(in). Functionally, proton-dependent transporter of monocarboxylates such as L-lactate and pyruvate. Plays a predominant role in the L-lactate efflux from highly glycolytic cells. The sequence is that of Monocarboxylate transporter 4 (Slc16a3) from Mus musculus (Mouse).